Consider the following 550-residue polypeptide: Glucose-6-phosphate isomerase (550 aa).

Glu356 serves as the catalytic Proton donor. Catalysis depends on residues His387 and Lys515.

The protein belongs to the GPI family.

The protein resides in the cytoplasm. The catalysed reaction is alpha-D-glucose 6-phosphate = beta-D-fructose 6-phosphate. It participates in carbohydrate biosynthesis; gluconeogenesis. It functions in the pathway carbohydrate degradation; glycolysis; D-glyceraldehyde 3-phosphate and glycerone phosphate from D-glucose: step 2/4. In terms of biological role, catalyzes the reversible isomerization of glucose-6-phosphate to fructose-6-phosphate. The chain is Glucose-6-phosphate isomerase from Vibrio parahaemolyticus serotype O3:K6 (strain RIMD 2210633).